The chain runs to 543 residues: uncharacterized protein (543 aa).

The region spanning 203–460 (NYPYIIAEIE…FLWFKEKVRE (258 aa)) is the Radical SAM core domain. The region spanning 470–534 (VVPKGTILRD…RRSITGKVVR (65 aa)) is the TRAM domain.

This is an uncharacterized protein from Methanocaldococcus jannaschii (strain ATCC 43067 / DSM 2661 / JAL-1 / JCM 10045 / NBRC 100440) (Methanococcus jannaschii).